The following is a 660-amino-acid chain: Bifunctional polymyxin resistance protein ArnA (660 aa).

The segment at methionine 1–leucine 304 is formyltransferase ArnAFT. Histidine 86–isoleucine 88 contacts (6R)-10-formyltetrahydrofolate. Histidine 104 serves as the catalytic Proton donor; for formyltransferase activity. (6R)-10-formyltetrahydrofolate contacts are provided by residues arginine 114 and valine 136–aspartate 140. The dehydrogenase ArnADH stretch occupies residues arginine 314–serine 660. NAD(+)-binding positions include aspartate 347 and aspartate 368 to isoleucine 369. UDP-alpha-D-glucuronate contacts are provided by residues alanine 393, tyrosine 398, and threonine 432 to serine 433. Glutamate 434 acts as the Proton acceptor; for decarboxylase activity in catalysis. UDP-alpha-D-glucuronate contacts are provided by residues arginine 460, asparagine 492, lysine 526–arginine 535, and tyrosine 613. Arginine 619 (proton donor; for decarboxylase activity) is an active-site residue.

This sequence in the N-terminal section; belongs to the Fmt family. UDP-L-Ara4N formyltransferase subfamily. In the C-terminal section; belongs to the NAD(P)-dependent epimerase/dehydratase family. UDP-glucuronic acid decarboxylase subfamily. Homohexamer, formed by a dimer of trimers.

The catalysed reaction is UDP-alpha-D-glucuronate + NAD(+) = UDP-beta-L-threo-pentopyranos-4-ulose + CO2 + NADH. It carries out the reaction UDP-4-amino-4-deoxy-beta-L-arabinose + (6R)-10-formyltetrahydrofolate = UDP-4-deoxy-4-formamido-beta-L-arabinose + (6S)-5,6,7,8-tetrahydrofolate + H(+). It functions in the pathway nucleotide-sugar biosynthesis; UDP-4-deoxy-4-formamido-beta-L-arabinose biosynthesis; UDP-4-deoxy-4-formamido-beta-L-arabinose from UDP-alpha-D-glucuronate: step 1/3. It participates in nucleotide-sugar biosynthesis; UDP-4-deoxy-4-formamido-beta-L-arabinose biosynthesis; UDP-4-deoxy-4-formamido-beta-L-arabinose from UDP-alpha-D-glucuronate: step 3/3. The protein operates within bacterial outer membrane biogenesis; lipopolysaccharide biosynthesis. Functionally, bifunctional enzyme that catalyzes the oxidative decarboxylation of UDP-glucuronic acid (UDP-GlcUA) to UDP-4-keto-arabinose (UDP-Ara4O) and the addition of a formyl group to UDP-4-amino-4-deoxy-L-arabinose (UDP-L-Ara4N) to form UDP-L-4-formamido-arabinose (UDP-L-Ara4FN). The modified arabinose is attached to lipid A and is required for resistance to polymyxin and cationic antimicrobial peptides. This is Bifunctional polymyxin resistance protein ArnA from Escherichia coli O9:H4 (strain HS).